A 179-amino-acid chain; its full sequence is Large ribosomal subunit protein uL6 (179 aa).

The protein belongs to the universal ribosomal protein uL6 family. Part of the 50S ribosomal subunit.

Its function is as follows. This protein binds to the 23S rRNA, and is important in its secondary structure. It is located near the subunit interface in the base of the L7/L12 stalk, and near the tRNA binding site of the peptidyltransferase center. This is Large ribosomal subunit protein uL6 from Kineococcus radiotolerans (strain ATCC BAA-149 / DSM 14245 / SRS30216).